The primary structure comprises 230 residues: MKPLVIFDLDGTLVDTPSGIVSAFITALRDLSMPFEDRRAIRATIGLPLEKAFGQILALPVEDERVTAAVRQYQAVFREQVLPQAPGLVFPGVVEGLALLKGQGYTLAVATSKVFASAKALLEAAGLWSYFDLVLGADMVAHPKPHPEMGLLAMSRLGADAATTAMVGDTTHDLLMAKQAGMAAIGVTWGIHTTDQLKAAEPQVIVDTFSEVVGAAHALLKLSSSPVSYC.

D8 functions as the Nucleophile in the catalytic mechanism. Residues D8, D10, and D169 each coordinate Mg(2+). D10 functions as the Proton donor in the catalytic mechanism.

Belongs to the HAD-like hydrolase superfamily. It depends on Mg(2+) as a cofactor.

Part of an operon that could be involved in the biosynthesis of the blue pigment indigoidine, which is implicated in pathogenicity and protection from oxidative stress. This chain is Probable phosphatase IndB, found in Dickeya dadantii (strain 3937) (Erwinia chrysanthemi (strain 3937)).